A 231-amino-acid polypeptide reads, in one-letter code: Probable septum site-determining protein MinC (231 aa).

Residues 102–125 (KEKAPRPAPAPQAPAQNTTPVTKT) are disordered.

This sequence belongs to the MinC family. In terms of assembly, interacts with MinD and FtsZ.

Functionally, cell division inhibitor that blocks the formation of polar Z ring septums. Rapidly oscillates between the poles of the cell to destabilize FtsZ filaments that have formed before they mature into polar Z rings. Prevents FtsZ polymerization. The sequence is that of Probable septum site-determining protein MinC from Escherichia coli O139:H28 (strain E24377A / ETEC).